A 275-amino-acid chain; its full sequence is Large ribosomal subunit protein uL2 (275 aa).

Disordered regions lie at residues 24-54 (LYKG…VRHQ) and 223-275 (VAMN…RHKR). 2 stretches are compositionally biased toward basic and acidic residues: residues 25-38 (YKGR…EKKT) and 229-241 (DHPH…RTGE).

The protein belongs to the universal ribosomal protein uL2 family. As to quaternary structure, part of the 50S ribosomal subunit. Forms a bridge to the 30S subunit in the 70S ribosome.

Functionally, one of the primary rRNA binding proteins. Required for association of the 30S and 50S subunits to form the 70S ribosome, for tRNA binding and peptide bond formation. It has been suggested to have peptidyltransferase activity; this is somewhat controversial. Makes several contacts with the 16S rRNA in the 70S ribosome. This chain is Large ribosomal subunit protein uL2, found in Azoarcus sp. (strain BH72).